The chain runs to 85 residues: Putative regulatory protein Dtur_1444 (85 aa).

This sequence belongs to the RemA family.

In Dictyoglomus turgidum (strain DSM 6724 / Z-1310), this protein is Putative regulatory protein Dtur_1444.